The chain runs to 391 residues: NADH-quinone oxidoreductase subunit D (391 aa).

It belongs to the complex I 49 kDa subunit family. As to quaternary structure, NDH-1 is composed of 14 different subunits. Subunits NuoB, C, D, E, F, and G constitute the peripheral sector of the complex.

The protein localises to the cell inner membrane. The catalysed reaction is a quinone + NADH + 5 H(+)(in) = a quinol + NAD(+) + 4 H(+)(out). Functionally, NDH-1 shuttles electrons from NADH, via FMN and iron-sulfur (Fe-S) centers, to quinones in the respiratory chain. The immediate electron acceptor for the enzyme in this species is believed to be ubiquinone. Couples the redox reaction to proton translocation (for every two electrons transferred, four hydrogen ions are translocated across the cytoplasmic membrane), and thus conserves the redox energy in a proton gradient. The chain is NADH-quinone oxidoreductase subunit D from Rickettsia felis (strain ATCC VR-1525 / URRWXCal2) (Rickettsia azadi).